The chain runs to 324 residues: PGR5-like protein 1A, chloroplastic (324 aa).

A chloroplast-targeting transit peptide spans 1–60; that stretch reads MGSKMLFSLTSPRLFSAVSRKPSSSFSPSPPSPSSRTQWTQLSPGKSISLRRRVFLLPAK. The interval 16 to 42 is disordered; sequence SAVSRKPSSSFSPSPPSPSSRTQWTQL. Topologically, residues 61–198 are stromal; the sequence is ATTEQSGPVG…KVYSDLAVDY (138 aa). Cysteines 82 and 183 form a disulfide. A helical transmembrane segment spans residues 199-219; it reads FKMLLLNVPATVVALGLFFFL. The Lumenal, thylakoid portion of the chain corresponds to 220-236; the sequence is DDITGFEITYIMELPEP. A helical membrane pass occupies residues 237 to 257; the sequence is YSFIFTWFAAVPVIVYLALSI. Over 258–324 the chain is Stromal; it reads TKLIIKDFLI…LITLPEGSQA (67 aa).

The protein belongs to the PGR5 family. Homodimer and heterodimer with PGR5. Interacts with PGR5, FD2, petC, psaD1, LFNR1 and LFNR2. Also interacts with a Fe-containing cofactor (FCC). In terms of processing, disulfide bonds; Cys-300 and Cys-303 are probably involved in the formation of disulfide bridges with 'Cys-11' and 'Cys-105' of PGR5 while Cys-272 and Cys-275 are probably involved in the binding of a Fe-containing cofactor (FCC).

The protein resides in the plastid. The protein localises to the chloroplast thylakoid membrane. Its activity is regulated as follows. Inhibited by antimycin A. Ferredoxin-plastoquinone reductase involved in cyclic electron flow (CEF) around photosystem I. The homodimer is probably not involved in CEF. This Arabidopsis thaliana (Mouse-ear cress) protein is PGR5-like protein 1A, chloroplastic (PGRL1A).